A 616-amino-acid chain; its full sequence is Large ribosomal subunit assembly factor BipA (616 aa).

Residues 8-204 form the tr-type G domain; the sequence is KKLRNIAIIA…AIVKHVEPPK (197 aa). GTP-binding positions include 20–25 and 134–137; these read DHGKTT and NKVD.

This sequence belongs to the TRAFAC class translation factor GTPase superfamily. Classic translation factor GTPase family. BipA subfamily. As to quaternary structure, monomer.

It is found in the cytoplasm. It carries out the reaction GTP + H2O = GDP + phosphate + H(+). Its function is as follows. A 50S ribosomal subunit assembly protein with GTPase activity, required for 50S subunit assembly at low temperatures, may also play a role in translation. Binds GTP and analogs. Binds the 70S ribosome between the 30S and 50S subunits, in a similar position as ribosome-bound EF-G; it contacts a number of ribosomal proteins, both rRNAs and the A-site tRNA. This chain is Large ribosomal subunit assembly factor BipA, found in Haemophilus influenzae (strain ATCC 51907 / DSM 11121 / KW20 / Rd).